A 309-amino-acid chain; its full sequence is Aspartate carbamoyltransferase catalytic subunit (309 aa).

Positions 57 and 58 each coordinate carbamoyl phosphate. Lys-86 is a binding site for L-aspartate. Carbamoyl phosphate-binding residues include Arg-107, His-135, and Gln-138. Residues Arg-168 and Arg-228 each contribute to the L-aspartate site. Residues Leu-267 and Pro-268 each contribute to the carbamoyl phosphate site.

This sequence belongs to the aspartate/ornithine carbamoyltransferase superfamily. ATCase family. Heterooligomer of catalytic and regulatory chains.

The catalysed reaction is carbamoyl phosphate + L-aspartate = N-carbamoyl-L-aspartate + phosphate + H(+). It participates in pyrimidine metabolism; UMP biosynthesis via de novo pathway; (S)-dihydroorotate from bicarbonate: step 2/3. Its function is as follows. Catalyzes the condensation of carbamoyl phosphate and aspartate to form carbamoyl aspartate and inorganic phosphate, the committed step in the de novo pyrimidine nucleotide biosynthesis pathway. This is Aspartate carbamoyltransferase catalytic subunit from Cenarchaeum symbiosum (strain A).